The sequence spans 125 residues: Transmembrane protein 14EP (125 aa).

Helical transmembrane passes span 9–29 (VPLY…GISG) and 81–101 (ILTL…LIVS).

It belongs to the TMEM14 family.

Its subcellular location is the membrane. The sequence is that of Transmembrane protein 14EP (TMEM14EP) from Homo sapiens (Human).